The sequence spans 468 residues: MAKRNAEKELTDRNWDQEDEAEEVGTFSMASEEVLKNRAIKKAKRRNVGFESDTGGAFKGFKGLVVPSGGGRFSGFGSGAGGKPLEGLSNGNNITSAPPFASAKAAADPKVAFGSLAANGPTTLVDKVSNPKTNGDSQQPSSSGLASSKACVGNAYHKQLAALNCSVRDWIVKHVNTNPLCDLTPIFKDYEKYLANIEQQHGNSGRNSESESNKVAAETQSPSLFGSTKLQQESTFLFHGNKTEDTPDKKMEVASEKKTDPSSLGATSASFNFGKKVDSSVLGSLSSVPLTGFSFSPGNSSLFGKDTTQSKPVSSPFPTKPLEGQAEGDSGECKGGDEEENDEPPKVVVTEVKEEDAFYSKKCKLFYKKDNEFKEKGIGTLHLKPTANQKTQLLVRADTNLGNILLNVLIPPNMPCTRTGKNNVLIVCVPNPPIDEKNATMPVTMLIRVKTSEDADELHKILLEKKDA.

Residues methionine 1–aspartate 16 show a composition bias toward basic and acidic residues. Residues methionine 1–threonine 26 form a disordered region. The residue at position 2 (alanine 2) is an N-acetylalanine. At lysine 8 the chain carries N6-acetyllysine. A Phosphoserine modification is found at serine 52. Residues phenylalanine 76–glycine 77 form repeat 1. Positions phenylalanine 76 to glycine 304 are 5 X 2 AA repeats of F-G. Lysine 83 carries the post-translational modification N6-acetyllysine. Copy 2 of the repeat occupies phenylalanine 113–glycine 114. 2 disordered regions span residues threonine 122–serine 148 and histidine 201–leucine 224. The residue at position 127 (lysine 127) is an N6-acetyllysine. Over residues serine 137–serine 148 the composition is skewed to low complexity. Residues glycine 144–arginine 206 are binding to CDKN1B. Residues serine 208 and serine 221 each carry the phosphoserine modification. Repeat 3 spans residues phenylalanine 225 to glycine 226. Serine 234 carries the phosphoserine modification. A disordered region spans residues phenylalanine 238 to alanine 269. The segment covering asparagine 241 to aspartate 260 has biased composition (basic and acidic residues). Phosphothreonine occurs at positions 246 and 259. Serine 270 carries the post-translational modification Phosphoserine. The stretch at phenylalanine 273–glycine 274 is repeat 4. The residue at position 296 (serine 296) is a Phosphoserine. The stretch at phenylalanine 303–glycine 304 is repeat 5. Residues glycine 304 to phenylalanine 317 show a composition bias toward polar residues. The tract at residues glycine 304–proline 345 is disordered. A RanBD1 domain is found at glycine 335–alanine 468. A Glycyl lysine isopeptide (Lys-Gly) (interchain with G-Cter in SUMO2) cross-link involves residue lysine 353. At lysine 450 the chain carries N6-acetyllysine.

As to quaternary structure, interacts with Importin alpha-2, Importin beta, Importin beta-2, NUP153, Ran binding protein 7, CDKN1B and itself. Does not interact with TPR. As to expression, ubiquitous. Highest levels in testis, peripheral blood leukocytes and fetal liver.

The protein localises to the nucleus. It is found in the nuclear pore complex. Its subcellular location is the nucleus membrane. Functionally, component of the nuclear pore complex that has a direct role in nuclear protein import. Actively displaces NLSs from importin-alpha, and facilitates disassembly of the importin-alpha:beta-cargo complex and importin recycling. Interacts with regulatory proteins of cell cycle progression including CDKN1B. This interaction is required for correct intracellular transport and degradation of CDKN1B. In Homo sapiens (Human), this protein is Nuclear pore complex protein Nup50 (NUP50).